A 421-amino-acid chain; its full sequence is FBD-associated F-box protein At5g56370 (421 aa).

Residues Met1–Asn52 form the F-box domain. The 51-residue stretch at His332–Pro382 folds into the FBD domain.

This chain is FBD-associated F-box protein At5g56370, found in Arabidopsis thaliana (Mouse-ear cress).